The sequence spans 935 residues: GPI ethanolamine phosphate transferase 1 (935 aa).

Topologically, residues 1–5 (MFGRL) are cytoplasmic. Residues 6-26 (LLLGILFHVVFLKSIFDIYFV) traverse the membrane as a helical segment. Residues 27–449 (TPLIHGMKQY…LQRYDWLLLR (423 aa)) lie on the Lumenal side of the membrane. 4 N-linked (GlcNAc...) asparagine glycosylation sites follow: N86, N134, N315, and N398. A helical membrane pass occupies residues 450-470 (SIVFFGYLSWIGYVICFVFSL). The Cytoplasmic segment spans residues 471-483 (NIEPSSKIVKPVS). The helical transmembrane segment at 484-503 (VVKRVAFNIPFLLICIFFYI) threads the bilayer. Residues 504 to 509 (QSSPPF) are Lumenal-facing. A helical transmembrane segment spans residues 510–530 (YYGYALFPTIFLQLIHSIFPN). Over 531–547 (TKLGFKNFLTVAKQKHG) the chain is Cytoplasmic. A helical transmembrane segment spans residues 548-568 (FSLLKILFISLCILCLLQFIV). Residues 569–576 (YSYFHREG) lie on the Lumenal side of the membrane. A helical transmembrane segment spans residues 577–597 (FSVILMGLAAWPWLLHADYAF). Topologically, residues 598-600 (SHK) are cytoplasmic. Residues 601-621 (TISVSWSVLTSLLCFFTILPV) traverse the membrane as a helical segment. Over 622–626 (NKKES) the chain is Lumenal. A helical membrane pass occupies residues 627-647 (LLFIFAGGFAMSVAGVFYILY). Residues 648–663 (RRNQAFQYSSTVTNKQ) are Cytoplasmic-facing. The helical transmembrane segment at 664–684 (LVLQVLIIMATVPVTLKIADS) threads the bilayer. At 685–688 (LQRN) the chain is on the lumenal side. The helical transmembrane segment at 689 to 709 (IAIPPILRLVAFGLFITSYII) threads the bilayer. The Cytoplasmic portion of the chain corresponds to 710 to 737 (PSHHIRSCKHYFLDRLAILFLTFSPTMC). Residues 738 to 758 (MLSISFEALFYVVLFITLGLW) traverse the membrane as a helical segment. Over 759-792 (MELETELQKYTEQLHPEYSRKKDAKFHLSLSHIR) the chain is Lumenal. The helical transmembrane segment at 793 to 813 (ISLFFYIFINVAFFGTGNVAS) threads the bilayer. The Cytoplasmic segment spans residues 814-835 (LSTFALDSVKRFIPVFNPVTQG). Residues 836–856 (ALLMYTILVPFIALSAAFGIM) form a helical membrane-spanning segment. At 857 to 865 (NKRLGGIQQ) the chain is on the lumenal side. The chain crosses the membrane as a helical span at residues 866-886 (VTFFLAVGMADIVTINFFYLV). At 887 to 894 (KDEGSWKD) the chain is on the cytoplasmic side. The chain crosses the membrane as a helical span at residues 895–915 (IGVSISHFCISNFLILFITAL). Over 916–935 (EHASAILCKNITYTIHEKVN) the chain is Lumenal. N925 carries an N-linked (GlcNAc...) asparagine glycan.

The protein belongs to the PIGG/PIGN/PIGO family. PIGN subfamily.

It is found in the endoplasmic reticulum membrane. It participates in glycolipid biosynthesis; glycosylphosphatidylinositol-anchor biosynthesis. In terms of biological role, ethanolamine phosphate transferase involved in glycosylphosphatidylinositol-anchor biosynthesis. Transfers ethanolamine phosphate to the first alpha-1,4-linked mannose of the glycosylphosphatidylinositol precursor of GPI-anchor. In Schizosaccharomyces pombe (strain 972 / ATCC 24843) (Fission yeast), this protein is GPI ethanolamine phosphate transferase 1 (its8).